We begin with the raw amino-acid sequence, 200 residues long: ATP-dependent Clp protease proteolytic subunit (200 aa).

Ser102 acts as the Nucleophile in catalysis. His127 is an active-site residue.

This sequence belongs to the peptidase S14 family. Fourteen ClpP subunits assemble into 2 heptameric rings which stack back to back to give a disk-like structure with a central cavity, resembling the structure of eukaryotic proteasomes.

It is found in the cytoplasm. The enzyme catalyses Hydrolysis of proteins to small peptides in the presence of ATP and magnesium. alpha-casein is the usual test substrate. In the absence of ATP, only oligopeptides shorter than five residues are hydrolyzed (such as succinyl-Leu-Tyr-|-NHMec, and Leu-Tyr-Leu-|-Tyr-Trp, in which cleavage of the -Tyr-|-Leu- and -Tyr-|-Trp bonds also occurs).. In terms of biological role, cleaves peptides in various proteins in a process that requires ATP hydrolysis. Has a chymotrypsin-like activity. Plays a major role in the degradation of misfolded proteins. This chain is ATP-dependent Clp protease proteolytic subunit, found in Dehalococcoides mccartyi (strain ATCC BAA-2266 / KCTC 15142 / 195) (Dehalococcoides ethenogenes (strain 195)).